Consider the following 349-residue polypeptide: MPVLHNRISNEELRARMLAETEPRTTISFYKYFTIDDPKATRDALWQAFTALNVFGRIYLAHEGINAQISVPESNVEAFRAALYGFHPALDGVRLNIALDDDGKSFWVLRMKVRDRIVADGIDDPTFDASDVGEYLKAAEVNAMLDDPDAVFIDMRNHYEYEVGHFENALEIPADTFRAQLPKAVEMMQEYKDKKIVMYCTGGIRCEKASAFMRHNGFQKVWHIEGGIIEYARKAREQGLPVRFVGKNFVFDERMGERISDDVIAHCHQCGAPCDSHTNCKNDGCHLLFIQCPACAEKFSGCCSELCKEEMSLPEEEQRRRRAGRENGNKIFNKSRGRLNTTLGIPDPE.

The 95-residue stretch at 146–240 folds into the Rhodanese domain; the sequence is DDPDAVFIDM…YARKAREQGL (95 aa). Cysteine 200 (cysteine persulfide intermediate) is an active-site residue. Positions 314-328 are enriched in basic and acidic residues; sequence PEEEQRRRRAGRENG. Positions 314–349 are disordered; it reads PEEEQRRRRAGRENGNKIFNKSRGRLNTTLGIPDPE.

Belongs to the TrhO family.

It carries out the reaction uridine(34) in tRNA + AH2 + O2 = 5-hydroxyuridine(34) in tRNA + A + H2O. Functionally, catalyzes oxygen-dependent 5-hydroxyuridine (ho5U) modification at position 34 in tRNAs. This Cronobacter sakazakii (strain ATCC BAA-894) (Enterobacter sakazakii) protein is tRNA uridine(34) hydroxylase.